We begin with the raw amino-acid sequence, 885 residues long: Leucine--tRNA ligase (885 aa).

The short motif at 48–58 (PYPSGKLHMGH) is the 'HIGH' region element. Residues 639 to 643 (TMSKS) carry the 'KMSKS' region motif. Residue Lys642 coordinates ATP.

It belongs to the class-I aminoacyl-tRNA synthetase family.

The protein resides in the cytoplasm. It carries out the reaction tRNA(Leu) + L-leucine + ATP = L-leucyl-tRNA(Leu) + AMP + diphosphate. The protein is Leucine--tRNA ligase of Bordetella pertussis (strain Tohama I / ATCC BAA-589 / NCTC 13251).